Here is a 717-residue protein sequence, read N- to C-terminus: Mitotic spindle assembly checkpoint protein MAD1 (717 aa).

Position 1 is an N-acetylmethionine (M1). S16 carries the post-translational modification Phosphoserine. Positions 46-631 form a coiled coil; the sequence is EQSMQLEERA…QTKIQEFRKV (586 aa). K61 carries the post-translational modification N6-acetyllysine; alternate. A Glycyl lysine isopeptide (Lys-Gly) (interchain with G-Cter in SUMO2); alternate cross-link involves residue K61. The Nuclear localization signal signature appears at 79–82; that stretch reads KRAR. Phosphoserine is present on residues S214 and S428. Residues 380 to 532 are necessary for interaction with NEK2; sequence LLEERKKREI…EMQMERLTLQ (153 aa). Residues 540 to 551 are necessary for interaction with MAD2L1; it reads TKVLHMSLNPAS.

It belongs to the MAD1 family. As to quaternary structure, homodimer. Dimerizes via its N- and C- terminal regions. Heterodimerizes with MAD2L1 in order to form a tetrameric MAD1L1-MAD2L1 core complex. Interacts with the closed conformation form of MAD2L1 (C-MAD2) and open conformation form of MAD2L1 (O-MAD2). It is unclear whether MAD1L1 dimerization promotes the conversion of closed to open conformation of MAD2L1. Formation of a heterotetrameric core complex containing two molecules each of MAD1L1 and of MAD2L1 promotes binding of another molecule of MAD2L1 to each MAD2L1, resulting in a heterohexamer. Perturbation of the original MAD1L1-MAD2L1 structure by the spindle checkpoint may decrease MAD2L1 affinity for MAD1L1. CDC20 can compete with MAD1L1 for MAD2L1 binding, until the attachment and/or tension dampen the checkpoint signal, preventing further release of MAD2L1 on to CDC20. Also able to interact with the BUB1/BUB3 complex. Interacts with NEK2. Interacts with TTK. Interacts with TPR; the interactions occurs in a microtubule-independent manner. Interacts with IK. Interacts with the viral Tax protein. Interacts with PRAP1. Phosphorylated; by BUB1. Become hyperphosphorylated in late S through M phases or after mitotic spindle damage.

It is found in the nucleus. It localises to the chromosome. Its subcellular location is the centromere. The protein localises to the kinetochore. The protein resides in the nucleus envelope. It is found in the cytoplasm. It localises to the cytoskeleton. Its subcellular location is the microtubule organizing center. The protein localises to the centrosome. The protein resides in the spindle. It is found in the spindle pole. Component of the spindle-assembly checkpoint that prevents the onset of anaphase until all chromosomes are properly aligned at the metaphase plate. Forms a heterotetrameric complex with the closed conformation form of MAD2L1 (C-MAD2) at unattached kinetochores during prometaphase, recruits an open conformation of MAD2L1 (O-MAD2) and promotes the conversion of O-MAD2 to C-MAD2, which ensures mitotic checkpoint signaling. In Cricetulus griseus (Chinese hamster), this protein is Mitotic spindle assembly checkpoint protein MAD1 (MAD1L1).